Consider the following 245-residue polypeptide: Demethylmenaquinone methyltransferase (245 aa).

Residues threonine 62, aspartate 80, aspartate 105 to alanine 106, and serine 122 contribute to the S-adenosyl-L-methionine site.

The protein belongs to the class I-like SAM-binding methyltransferase superfamily. MenG/UbiE family.

The enzyme catalyses a 2-demethylmenaquinol + S-adenosyl-L-methionine = a menaquinol + S-adenosyl-L-homocysteine + H(+). The protein operates within quinol/quinone metabolism; menaquinone biosynthesis; menaquinol from 1,4-dihydroxy-2-naphthoate: step 2/2. Functionally, methyltransferase required for the conversion of demethylmenaquinol (DMKH2) to menaquinol (MKH2). The polypeptide is Demethylmenaquinone methyltransferase (Clavibacter sepedonicus (Clavibacter michiganensis subsp. sepedonicus)).